Consider the following 1169-residue polypeptide: Protein qua-1 (1169 aa).

The first 22 residues, 1–22 (MRRLSAILPILLLSNFWPTVES), serve as a signal peptide directing secretion. Disordered stretches follow at residues 261–338 (GATG…AGTN) and 368–933 (AGGV…RTSS). Positions 278–292 (ESNGNNNNSFEGGRS) are enriched in low complexity. A compositionally biased stretch (gly residues) spans 312–337 (GAGGKGGAGADGAAGSGAGAGAGAGT). 2 stretches are compositionally biased toward acidic residues: residues 426–437 (DEEDEEDNGDED) and 453–464 (DDGDGDEDDDGT). Residues 511–523 (SPDDNDLLEKDEN) show a composition bias toward basic and acidic residues. 5 stretches are compositionally biased toward gly residues: residues 526–536 (NGKGGAGNGNG), 545–572 (KGNG…GTGD), 605–634 (DGNG…GSGD), 656–700 (GSNG…GGTG), and 727–752 (NAEG…GAGG). A compositionally biased stretch (basic and acidic residues) spans 753 to 774 (KGDKSDSESGNEADGKDGKKNE). Residues 775-791 (GAGGEAAAGSGGANKGG) are compositionally biased toward gly residues. Acidic residues predominate over residues 793 to 803 (DGDDDDVDVTD). Residues 840 to 855 (GTVQTGAKHNAESSAS) show a composition bias toward polar residues. Residues 889-906 (SGTSESVTNGSGATESGS) show a composition bias toward low complexity. Over residues 907–923 (TGSGTTGTGTSGTGSSG) the composition is skewed to gly residues. The span at 924–933 (TGASAARTSS) shows a compositional bias: low complexity.

Transiently expressed in head cells.

Its subcellular location is the cytoplasmic vesicle. The protein localises to the secreted. It is found in the extracellular space. The protein resides in the extracellular matrix. Required for cuticle shedding and normal alae morphology and localization, and subsequently larval development. The sequence is that of Protein qua-1 from Caenorhabditis elegans.